A 198-amino-acid chain; its full sequence is Protein GrpE (198 aa).

The protein belongs to the GrpE family. As to quaternary structure, homodimer.

The protein resides in the cytoplasm. In terms of biological role, participates actively in the response to hyperosmotic and heat shock by preventing the aggregation of stress-denatured proteins, in association with DnaK and GrpE. It is the nucleotide exchange factor for DnaK and may function as a thermosensor. Unfolded proteins bind initially to DnaJ; upon interaction with the DnaJ-bound protein, DnaK hydrolyzes its bound ATP, resulting in the formation of a stable complex. GrpE releases ADP from DnaK; ATP binding to DnaK triggers the release of the substrate protein, thus completing the reaction cycle. Several rounds of ATP-dependent interactions between DnaJ, DnaK and GrpE are required for fully efficient folding. The sequence is that of Protein GrpE from Actinobacillus pleuropneumoniae serotype 7 (strain AP76).